Here is a 224-residue protein sequence, read N- to C-terminus: Agamous-like MADS-box protein AGL9 homolog (224 aa).

The 55-residue stretch at R3 to F57 folds into the MADS-box domain. The K-box domain maps to E89–L179.

Flower specific.

It is found in the nucleus. Its function is as follows. Probable transcription factor active in inflorescence development and floral organogenesis. The chain is Agamous-like MADS-box protein AGL9 homolog (TDR5) from Solanum lycopersicum (Tomato).